We begin with the raw amino-acid sequence, 153 residues long: ATP synthase subunit a (153 aa).

2 consecutive transmembrane segments (helical) span residues 43-63 and 104-124; these read AFHL…LLIF and IAPL…VDLI.

The protein belongs to the ATPase A chain family. In terms of assembly, F-type ATPases have 2 components, CF(1) - the catalytic core - and CF(0) - the membrane proton channel. CF(1) has five subunits: alpha(3), beta(3), gamma(1), delta(1), epsilon(1). CF(0) has three main subunits: a(1), b(2) and c(9-12). The alpha and beta chains form an alternating ring which encloses part of the gamma chain. CF(1) is attached to CF(0) by a central stalk formed by the gamma and epsilon chains, while a peripheral stalk is formed by the delta and b chains.

Its subcellular location is the cell inner membrane. Key component of the proton channel; it plays a direct role in the translocation of protons across the membrane. This chain is ATP synthase subunit a (atpB), found in Pseudomonas putida (Arthrobacter siderocapsulatus).